The following is an 89-amino-acid chain: Small ribosomal subunit protein bS20 (89 aa).

Residues Met-1–Arg-25 are disordered.

Belongs to the bacterial ribosomal protein bS20 family.

In terms of biological role, binds directly to 16S ribosomal RNA. In Paracoccus denitrificans (strain Pd 1222), this protein is Small ribosomal subunit protein bS20.